Here is a 243-residue protein sequence, read N- to C-terminus: Ribonuclease 3 (243 aa).

Residues 10 to 146 form the RNase III domain; it reads INRFRKRFDT…FIGALYLDQG (137 aa). Position 59 (glutamate 59) interacts with Mg(2+). Residue aspartate 63 is part of the active site. Residues aspartate 132 and glutamate 135 each contribute to the Mg(2+) site. The active site involves glutamate 135. One can recognise a DRBM domain in the interval 172-241; it reads DFKTQFQEYV…AESAYKQLKQ (70 aa). Positions 219 to 231 are enriched in basic and acidic residues; it reads GKGKTKKESEQRA. Positions 219-243 are disordered; it reads GKGKTKKESEQRAAESAYKQLKQIK.

This sequence belongs to the ribonuclease III family. As to quaternary structure, homodimer. Requires Mg(2+) as cofactor.

Its subcellular location is the cytoplasm. It carries out the reaction Endonucleolytic cleavage to 5'-phosphomonoester.. In terms of biological role, digests double-stranded RNA. Involved in the processing of primary rRNA transcript to yield the immediate precursors to the large and small rRNAs (23S and 16S). Processes some mRNAs, and tRNAs when they are encoded in the rRNA operon. Processes pre-crRNA and tracrRNA of type II CRISPR loci if present in the organism. This is Ribonuclease 3 from Staphylococcus aureus (strain bovine RF122 / ET3-1).